The following is a 170-amino-acid chain: Cathelicidin antimicrobial peptide (170 aa).

The first 30 residues, 1–30 (MKTQRDSPSLGRWSLVLLLLGLVMPLAIVA), serve as a signal peptide directing secretion. Residues 31–131 (QVLSYQEAVL…DISCDKDNRR (101 aa)) constitute a propeptide, cathelin-like domain (CLD). Disulfide bonds link Cys-86–Cys-97 and Cys-108–Cys-125. Residues 150-162 (FKRIVQRIKDFLQ) form an active core region.

This sequence belongs to the cathelicidin family. Monomer, homodimer or homotrimer (in vitro). Oligomerizes as tetra- or hexamer in solution (in vitro). In terms of processing, proteolytically cleaved by proteinase PRTN3 into antibacterial peptide LL-37. Proteolytically cleaved by cathepsin CTSG and neutrophil elastase ELANE. Resistant to proteolytic degradation in solution, and when bound to both zwitterionic (mimicking mammalian membranes) and negatively charged membranes (mimicking bacterial membranes). Post-translationally, after secretion onto the skin surface, the CAMP gene product is processed by a serine protease-dependent mechanism into multiple novel antimicrobial peptides distinct from and shorter than cathelicidin LL-37. These peptides show enhanced antimicrobial action, acquiring the ability to kill skin pathogens such as S.aureus, E.coli and C.albicans. These peptides have lost the ability to stimulate CXCL8/IL8 release from keratinocytes. The peptides act synergistically, killing bacteria at lower concentrations when present together, and maintain activity at increased salt condition.

The protein localises to the secreted. The protein resides in the vesicle. Functionally, antimicrobial protein that is an integral component of the innate immune system. Binds to bacterial lipopolysaccharides (LPS). Acts via neutrophil N-formyl peptide receptors to enhance the release of CXCL2. Postsecretory processing generates multiple cathelicidin antimicrobial peptides with various lengths which act as a topical antimicrobial defense in sweat on skin. The unprocessed precursor form, cathelicidin antimicrobial peptide, inhibits the growth of Gram-negative E.coli and E.aerogenes with efficiencies comparable to that of the mature peptide LL-37 (in vitro). Antimicrobial peptide that is an integral component of the innate immune system. Binds to bacterial lipopolysaccharides (LPS). Causes membrane permeabilization by forming transmembrane pores (in vitro). Causes lysis of E.coli. Exhibits antimicrobial activity against Gram-negative bacteria such as P.aeruginosa, S.typhimurium, E.aerogenes, E.coli and P.syringae, Gram-positive bacteria such as L.monocytogenes, S.epidermidis, S.pyogenes and S.aureus, as well as vancomycin-resistant enterococci (in vitro). Exhibits antimicrobial activity against methicillin-resistant S.aureus, P.mirabilis, and C.albicans in low-salt media, but not in media containing 100 mM NaCl (in vitro). Forms chiral supramolecular assemblies with quinolone signal (PQS) molecules of P.aeruginosa, which may lead to interference of bacterial quorum signaling and perturbance of bacterial biofilm formation. May form supramolecular fiber-like assemblies on bacterial membranes. Induces cytokine and chemokine producation as well as TNF/TNFA and CSF2/GMCSF production in normal human keratinocytes. Exhibits hemolytic activity against red blood cells. In terms of biological role, exhibits antimicrobial activity against E.coli and B.megaterium (in vitro). The protein is Cathelicidin antimicrobial peptide of Nomascus concolor (Black crested gibbon).